A 178-amino-acid polypeptide reads, in one-letter code: Oligoribonuclease (178 aa).

Residues 7–168 (LIWIDLEMTG…DDIRESIAEL (162 aa)) form the Exonuclease domain. Residue Tyr-128 is part of the active site.

The protein belongs to the oligoribonuclease family.

It is found in the cytoplasm. 3'-to-5' exoribonuclease specific for small oligoribonucleotides. The chain is Oligoribonuclease from Pseudomonas savastanoi pv. phaseolicola (strain 1448A / Race 6) (Pseudomonas syringae pv. phaseolicola (strain 1448A / Race 6)).